The following is a 326-amino-acid chain: Fructose-1,6-bisphosphatase class 1 2 (326 aa).

Mg(2+) is bound by residues E84, D103, L105, and D106. Residues 106–109 (DGSS), N198, and K262 contribute to the substrate site. E268 is a binding site for Mg(2+).

It belongs to the FBPase class 1 family. Homotetramer. It depends on Mg(2+) as a cofactor.

The protein resides in the cytoplasm. It catalyses the reaction beta-D-fructose 1,6-bisphosphate + H2O = beta-D-fructose 6-phosphate + phosphate. Its pathway is carbohydrate biosynthesis; gluconeogenesis. In Pseudoalteromonas translucida (strain TAC 125), this protein is Fructose-1,6-bisphosphatase class 1 2.